The sequence spans 112 residues: Large ribosomal subunit protein P1 (112 aa).

Positions 80-112 (AAAAPAAESKKEEKKKEEESDQSDDDMGFGLFD) are disordered. Residues 87–97 (ESKKEEKKKEE) show a composition bias toward basic and acidic residues. 2 positions are modified to phosphoserine: S99 and S102.

Belongs to the eukaryotic ribosomal protein P1/P2 family. In terms of assembly, P1 and P2 exist as dimers at the large ribosomal subunit.

Its function is as follows. Plays an important role in the elongation step of protein synthesis. The sequence is that of Large ribosomal subunit protein P1 (RpLP1) from Drosophila melanogaster (Fruit fly).